The sequence spans 184 residues: Adenylate kinase 1 (184 aa).

G11–T16 contributes to the ATP binding site. Residues S31–V60 are NMP. Residues T32, R37, E58–V60, G86–R89, and Q93 each bind AMP. Residues S127–D133 form an LID region. An ATP-binding site is contributed by R128. AMP-binding residues include R130 and R141. Q169 is an ATP binding site.

Belongs to the adenylate kinase family. Monomer.

Its subcellular location is the cytoplasm. It carries out the reaction AMP + ATP = 2 ADP. It participates in purine metabolism; AMP biosynthesis via salvage pathway; AMP from ADP: step 1/1. Catalyzes the reversible transfer of the terminal phosphate group between ATP and AMP. Plays an important role in cellular energy homeostasis and in adenine nucleotide metabolism. The protein is Adenylate kinase 1 of Nostoc sp. (strain PCC 7120 / SAG 25.82 / UTEX 2576).